Here is a 230-residue protein sequence, read N- to C-terminus: U2 small nuclear ribonucleoprotein A' (230 aa).

LRR repeat units lie at residues 15-36, 48-69, 71-92, 93-114, and 115-136; these read SLRN…NADT, GDRE…GVTE, HYTS…PRLE, TLRT…KNIA, and KLET…ESLK. The region spanning 149–187 is the LRRCT domain; sequence NPVQHVPRYRSYMISILPSLRMLDFQRVTQKERDEAEAM.

This sequence belongs to the U2 small nuclear ribonucleoprotein A family. As to quaternary structure, associated with the spliceosome.

The protein localises to the nucleus. In terms of biological role, involved in pre-mRNA splicing. This chain is U2 small nuclear ribonucleoprotein A' (LEA1), found in Yarrowia lipolytica (strain CLIB 122 / E 150) (Yeast).